Here is a 322-residue protein sequence, read N- to C-terminus: uncharacterized protein (322 aa).

Residues 299–319 (GLLLEGTIVALILLEIILALA) traverse the membrane as a helical segment.

The protein resides in the membrane. This is an uncharacterized protein from Methanocaldococcus jannaschii (strain ATCC 43067 / DSM 2661 / JAL-1 / JCM 10045 / NBRC 100440) (Methanococcus jannaschii).